We begin with the raw amino-acid sequence, 122 residues long: Large ribosomal subunit protein uL14 (122 aa).

It belongs to the universal ribosomal protein uL14 family. In terms of assembly, part of the 50S ribosomal subunit. Forms a cluster with proteins L3 and L19. In the 70S ribosome, L14 and L19 interact and together make contacts with the 16S rRNA in bridges B5 and B8.

Binds to 23S rRNA. Forms part of two intersubunit bridges in the 70S ribosome. This Beijerinckia indica subsp. indica (strain ATCC 9039 / DSM 1715 / NCIMB 8712) protein is Large ribosomal subunit protein uL14.